Consider the following 267-residue polypeptide: Potassium channel regulatory protein (267 aa).

Positions 5 to 74 constitute a BTB domain; sequence ELVTLNVGGK…LRTQQLLLPT (70 aa).

As to quaternary structure, can form homooligomers. Interacts with KCNA1 (via cytoplasmic N-terminal domain) and KCNA4.

It localises to the endoplasmic reticulum. Its function is as follows. Inhibits potassium fluxes in cells. May regulate Kv1 family channel proteins by retaining a fraction of channels in endomembranes. The polypeptide is Potassium channel regulatory protein (KCNRG) (Bos taurus (Bovine)).